Consider the following 114-residue polypeptide: Large ribosomal subunit protein bL21c (114 aa).

Belongs to the bacterial ribosomal protein bL21 family. In terms of assembly, part of the 50S ribosomal subunit.

The protein resides in the plastid. The protein localises to the chloroplast. Functionally, this protein binds to 23S rRNA. This is Large ribosomal subunit protein bL21c from Staurastrum punctulatum (Green alga).